We begin with the raw amino-acid sequence, 480 residues long: Chromosomal replication initiator protein DnaA (480 aa).

Residues M1–E71 form a domain I, interacts with DnaA modulators region. The segment at E71–S137 is domain II. The segment at P138–R360 is domain III, AAA+ region. G184, G186, K187, and T188 together coordinate ATP. The segment at S361–E480 is domain IV, binds dsDNA.

The protein belongs to the DnaA family. Oligomerizes as a right-handed, spiral filament on DNA at oriC.

It localises to the cytoplasm. Plays an essential role in the initiation and regulation of chromosomal replication. ATP-DnaA binds to the origin of replication (oriC) to initiate formation of the DNA replication initiation complex once per cell cycle. Binds the DnaA box (a 9 base pair repeat at the origin) and separates the double-stranded (ds)DNA. Forms a right-handed helical filament on oriC DNA; dsDNA binds to the exterior of the filament while single-stranded (ss)DNA is stabiized in the filament's interior. The ATP-DnaA-oriC complex binds and stabilizes one strand of the AT-rich DNA unwinding element (DUE), permitting loading of DNA polymerase. After initiation quickly degrades to an ADP-DnaA complex that is not apt for DNA replication. Binds acidic phospholipids. The polypeptide is Chromosomal replication initiator protein DnaA (Rhizobium meliloti (strain 1021) (Ensifer meliloti)).